A 105-amino-acid polypeptide reads, in one-letter code: Small ribosomal subunit protein uS10 (105 aa).

Belongs to the universal ribosomal protein uS10 family. As to quaternary structure, part of the 30S ribosomal subunit.

In terms of biological role, involved in the binding of tRNA to the ribosomes. This chain is Small ribosomal subunit protein uS10, found in Chlamydia muridarum (strain MoPn / Nigg).